Here is a 473-residue protein sequence, read N- to C-terminus: MSIFSSRRQFLKSLGLAAGAAAAGNALPGKAVEIPAGDHLWKSASPAAPRPSGSTYMGGFKAPRLGRIRLAFIGVGGRGFSHLAQMCVMDGVEIVGICDLKEELTKRGVDRVLSRMGKSPLGYSGGDMEYLTMLKELKPDAVIISTDWSSHARIACDSMKHGAHAFVEVPLAVSLEELWSLVDTSEATRKHCMMMENVNYGRDELMFLNMVRQGVIGDLLHGEAAYIHCLVTQLGDTRGEGAWRPEYHTRINGNLYPTHGLGPVAQYMNLERGEDRFCRVAAFASPALGRNAYAKKHLPADHRWNNTPFICGDMNTAVVKTQLGRTILVQLDETSPRPYSRANLIQGTEGTLAGFPTRVAGEKLGNGNYHEWIEGREKLAAIYEKYDHPLWKRIGELATKMGGHGGMDFVMLSRIVECLRNGEPMDQNVYEGASWSSLLPLTARSIAQGGMPVEFPDFTRGDWKTTMPLAVVS.

Residues 1-31 (MSIFSSRRQFLKSLGLAAGAAAAGNALPGKA) constitute a signal peptide (tat-type signal). NAD(+)-binding positions include 77-78 (GR), Asp99, 148-151 (WSSH), 168-169 (EV), and Asn197. Substrate is bound by residues Tyr226, Arg244, 256 to 259 (YPTH), and Tyr339. Residue Tyr256 coordinates NAD(+).

This sequence belongs to the Gfo/Idh/MocA family. Glycosyl hydrolase 109 subfamily. NAD(+) serves as cofactor. Predicted to be exported by the Tat system. The position of the signal peptide cleavage has not been experimentally proven.

Glycosidase. The polypeptide is Glycosyl hydrolase family 109 protein 2 (Akkermansia muciniphila (strain ATCC BAA-835 / DSM 22959 / JCM 33894 / BCRC 81048 / CCUG 64013 / CIP 107961 / Muc)).